Here is a 72-residue protein sequence, read N- to C-terminus: Brevinin-2GHc (72 aa).

The N-terminal stretch at 1–22 is a signal peptide; the sequence is MFTMKKSLLLLFFLGMISLSLC. Residues 23 to 42 constitute a propeptide that is removed on maturation; that stretch reads EQERGADEDEGEVEEQIKRS. Cysteine 64 and cysteine 70 are oxidised to a cystine.

Expressed by the skin glands.

The protein resides in the secreted. Functionally, antimicrobial peptide. Active against the Gram-positive bacteria S.aureus FDA209P (MIC=9.8 ug/ml) and B.subtilis ATCC 6633 (MIC&gt;64 ug/ml), and the Gram-negative bacteria E.coli O111 (MIC=19.6 ug/ml) and E.coli ATCC 25922 (MIC=9.8 ug/ml). Not active against the fungus C.albicans. The sequence is that of Brevinin-2GHc from Sylvirana guentheri (Gunther's frog).